The chain runs to 134 residues: Large ribosomal subunit protein eL27 (134 aa).

One can recognise a KOW domain in the interval 5–40; sequence LKSGKVVVVLSGRFAGKKAVIVRNFDDGTSSRPYGH.

This sequence belongs to the eukaryotic ribosomal protein eL27 family.

The polypeptide is Large ribosomal subunit protein eL27 (RPL27) (Pyrobotrys stellatus (Green alga)).